The sequence spans 892 residues: Transposase for transposon Tn4556 (892 aa).

Basic and acidic residues predominate over residues 1-12 (MGGRAGLDDGRG). The disordered stretch occupies residues 1–63 (MGGRAGLDDG…GQPARDAEHR (63 aa)). Positions 23–34 (VAEGAAGAAAWG) are enriched in low complexity.

The protein belongs to the transposase 7 family.

Functionally, required for transposition of transposon Tn4556. This chain is Transposase for transposon Tn4556 (tnpA), found in Streptomyces fradiae (Streptomyces roseoflavus).